A 741-amino-acid polypeptide reads, in one-letter code: Hemolysin (741 aa).

An N-terminal signal peptide occupies residues 1-25 (MPKLNRCAIAIFTILSAISSPTLLA). The propeptide occupies 26–157 (NINEPSGEAA…RSGFASPAPA (132 aa)). Cystine bridges form between cysteine 182-cysteine 200, cysteine 497-cysteine 511, and cysteine 537-cysteine 549. Residues 484-575 (RPVNLQLASF…LTNVYSGESL (92 aa)) enclose the Ricin B-type lectin domain. The beta-prism domain stretch occupies residues 607-741 (NAQESSPILG…LVKGVQFDLN (135 aa)).

The protein belongs to the HlyA hemolysin family. Monomer. Homoheptamer. After binding to target membranes the protein assembles into a heptameric pre-pore complex. Proteolytic cleavage triggers a conformation change that is required for membrane insertion and pore formation. In terms of processing, proteolytical cleavage is required to convert the 80 kDa hemolysin precursor into the active 65 kDa hemolysin.

It is found in the secreted. Its subcellular location is the host cell membrane. Functionally, bacterial hemolysin that causes cytolysis by forming heptameric pores in target host membranes. In Vibrio cholerae serotype O1 (strain ATCC 39315 / El Tor Inaba N16961), this protein is Hemolysin (hlyA).